Consider the following 430-residue polypeptide: 3-phosphoshikimate 1-carboxyvinyltransferase (430 aa).

3-phosphoshikimate is bound by residues Lys25, Ser26, and Arg30. Lys25 serves as a coordination point for phosphoenolpyruvate. Residues Gly97 and Arg125 each contribute to the phosphoenolpyruvate site. Residues Ser170, Gln172, Asp318, and Lys345 each coordinate 3-phosphoshikimate. Gln172 lines the phosphoenolpyruvate pocket. Residue Asp318 is the Proton acceptor of the active site. Phosphoenolpyruvate contacts are provided by Arg349 and Arg391.

This sequence belongs to the EPSP synthase family. Monomer.

The protein resides in the cytoplasm. It catalyses the reaction 3-phosphoshikimate + phosphoenolpyruvate = 5-O-(1-carboxyvinyl)-3-phosphoshikimate + phosphate. It functions in the pathway metabolic intermediate biosynthesis; chorismate biosynthesis; chorismate from D-erythrose 4-phosphate and phosphoenolpyruvate: step 6/7. Catalyzes the transfer of the enolpyruvyl moiety of phosphoenolpyruvate (PEP) to the 5-hydroxyl of shikimate-3-phosphate (S3P) to produce enolpyruvyl shikimate-3-phosphate and inorganic phosphate. This is 3-phosphoshikimate 1-carboxyvinyltransferase from Shouchella clausii (strain KSM-K16) (Alkalihalobacillus clausii).